A 388-amino-acid chain; its full sequence is Dual-specificity RNA methyltransferase RlmN (388 aa).

Residue glutamate 109 is the Proton acceptor of the active site. Positions 115–354 (EEDRATLCVS…TIVRKTRGDD (240 aa)) constitute a Radical SAM core domain. A disulfide bridge links cysteine 122 with cysteine 359. The [4Fe-4S] cluster site is built by cysteine 129, cysteine 133, and cysteine 136. Residues 183 to 184 (GE), serine 215, 237 to 239 (SLH), and asparagine 316 contribute to the S-adenosyl-L-methionine site. Cysteine 359 serves as the catalytic S-methylcysteine intermediate.

Belongs to the radical SAM superfamily. RlmN family. It depends on [4Fe-4S] cluster as a cofactor.

Its subcellular location is the cytoplasm. The enzyme catalyses adenosine(2503) in 23S rRNA + 2 reduced [2Fe-2S]-[ferredoxin] + 2 S-adenosyl-L-methionine = 2-methyladenosine(2503) in 23S rRNA + 5'-deoxyadenosine + L-methionine + 2 oxidized [2Fe-2S]-[ferredoxin] + S-adenosyl-L-homocysteine. It carries out the reaction adenosine(37) in tRNA + 2 reduced [2Fe-2S]-[ferredoxin] + 2 S-adenosyl-L-methionine = 2-methyladenosine(37) in tRNA + 5'-deoxyadenosine + L-methionine + 2 oxidized [2Fe-2S]-[ferredoxin] + S-adenosyl-L-homocysteine. In terms of biological role, specifically methylates position 2 of adenine 2503 in 23S rRNA and position 2 of adenine 37 in tRNAs. m2A2503 modification seems to play a crucial role in the proofreading step occurring at the peptidyl transferase center and thus would serve to optimize ribosomal fidelity. The protein is Dual-specificity RNA methyltransferase RlmN of Enterobacter sp. (strain 638).